The sequence spans 120 residues: MKRILLAEDDNDMRRFLVKALEKAGYHVTHFDNGASAYERLQEEPFSLLLTDIVMPEMDGIELARRATEIDPDLKIMFITGFAAVALNPDSDAPRDAKVLSKPFHLRDLVNEIEKMLIAA.

The Response regulatory domain maps to 3–117 (RILLAEDDND…DLVNEIEKML (115 aa)). Position 52 is a 4-aspartylphosphate (aspartate 52).

Is phosphorylated by ChpT-P on Asp-52.

It localises to the cytoplasm. Functionally, component of a regulatory phosphorelay system that controls B.abortus cell growth, division, and intracellular survival inside mammalian host cells. This signaling pathway is composed of CckA, ChpT, CtrA and CpdR. CpdR is a response regulator substrate of ChpT. Unphosphorylated CpdR controls steady-state levels of CtrA in the B.abortus cell, likely via CtrA destabilization and activation of its proteolysis. The sequence is that of Response regulator receiver protein CpdR from Brucella abortus (strain 2308).